The chain runs to 146 residues: Large ribosomal subunit protein uL15 (146 aa).

The span at 1-13 (MKLHELKPAEGSR) shows a compositional bias: basic and acidic residues. The segment at 1 to 52 (MKLHELKPAEGSRKVRNRVGRGIGSGNGKTAGKGHKGQNARSGGGVRLGFEG) is disordered. 2 stretches are compositionally biased toward gly residues: residues 21 to 31 (RGIGSGNGKTA) and 42 to 52 (SGGGVRLGFEG).

It belongs to the universal ribosomal protein uL15 family. Part of the 50S ribosomal subunit.

Its function is as follows. Binds to the 23S rRNA. The protein is Large ribosomal subunit protein uL15 of Bacillus anthracis (strain A0248).